The following is a 147-amino-acid chain: Cytochrome c oxidase subunit 3 (147 aa).

The next 4 membrane-spanning stretches (helical) occupy residues 13–33 (FQIPLLNTIILISSGVSVTWA), 48–68 (GLFITIILGIYFTILQAYEYF), 83–103 (FFMATGFHGLHVIIGTLFLLI), and 125–145 (AWYWHFVDVVWLFLYISIYWW).

The protein belongs to the cytochrome c oxidase subunit 3 family. As to quaternary structure, component of the cytochrome c oxidase (complex IV, CIV), a multisubunit enzyme composed of a catalytic core of 3 subunits and several supernumerary subunits. The complex exists as a monomer or a dimer and forms supercomplexes (SCs) in the inner mitochondrial membrane with ubiquinol-cytochrome c oxidoreductase (cytochrome b-c1 complex, complex III, CIII).

Its subcellular location is the mitochondrion inner membrane. The catalysed reaction is 4 Fe(II)-[cytochrome c] + O2 + 8 H(+)(in) = 4 Fe(III)-[cytochrome c] + 2 H2O + 4 H(+)(out). Component of the cytochrome c oxidase, the last enzyme in the mitochondrial electron transport chain which drives oxidative phosphorylation. The respiratory chain contains 3 multisubunit complexes succinate dehydrogenase (complex II, CII), ubiquinol-cytochrome c oxidoreductase (cytochrome b-c1 complex, complex III, CIII) and cytochrome c oxidase (complex IV, CIV), that cooperate to transfer electrons derived from NADH and succinate to molecular oxygen, creating an electrochemical gradient over the inner membrane that drives transmembrane transport and the ATP synthase. Cytochrome c oxidase is the component of the respiratory chain that catalyzes the reduction of oxygen to water. Electrons originating from reduced cytochrome c in the intermembrane space (IMS) are transferred via the dinuclear copper A center (CU(A)) of subunit 2 and heme A of subunit 1 to the active site in subunit 1, a binuclear center (BNC) formed by heme A3 and copper B (CU(B)). The BNC reduces molecular oxygen to 2 water molecules using 4 electrons from cytochrome c in the IMS and 4 protons from the mitochondrial matrix. This chain is Cytochrome c oxidase subunit 3 (COIII), found in Spodoptera frugiperda (Fall armyworm).